A 1039-amino-acid chain; its full sequence is Multidrug resistance protein MdtB (1039 aa).

12 consecutive transmembrane segments (helical) span residues 16 to 36, 342 to 362, 373 to 393, 396 to 416, 440 to 460, 472 to 492, 537 to 557, 863 to 883, 888 to 908, 911 to 931, 968 to 988, and 1002 to 1022; these read FILR…AGII, DVQF…YVFL, VAVP…GFSI, LTLM…IVVI, IGFT…PLLF, FAVT…TLTP, WLTL…YLLI, LGGT…VLGV, FIHP…ALLA, MAGS…IGIV, ILMT…STGV, and GGLV…YLLF.

This sequence belongs to the resistance-nodulation-cell division (RND) (TC 2.A.6) family. MdtB subfamily. In terms of assembly, part of a tripartite efflux system composed of MdtA, MdtB and MdtC. MdtB forms a heteromultimer with MdtC.

It is found in the cell inner membrane. The protein is Multidrug resistance protein MdtB of Serratia proteamaculans (strain 568).